The sequence spans 176 residues: F(420)H(2) dehydrogenase subunit J (176 aa).

5 helical membrane-spanning segments follow: residues 13–33 (TAVFGLLALVTVFFAIFVVIA), 39–59 (AGLALIMCMFGVAGLYILLNA), 64–84 (VIQVLVYIGAIGVLILFAVML), 99–119 (PLAFLVCLLFVAVVVTGAFGT), and 140–160 (IGMLIFTHFVAPFEVLSIVLL).

This sequence belongs to the complex I subunit 6 family. In terms of assembly, the FPO complex is composed of at least 13 different subunits. FpoA, FpoH, FpoJ, FpoK, FpoL, FpoM and FpoN proteins constitute the membrane sector of the complex.

The protein localises to the cell membrane. It carries out the reaction methanophenazine + reduced coenzyme F420-(gamma-L-Glu)(n) = dihydromethanophenazine + oxidized coenzyme F420-(gamma-L-Glu)(n) + H(+). In terms of biological role, component of the F(420)H(2) dehydrogenase (FPO complex) which is part of the energy-conserving F(420)H(2):heterodisulfide oxidoreductase system. The membrane-bound electron transfer system of the complex plays an important role in the metabolism of methylotrophic methanogens when the organisms grow on methanol or methylamines. Catalyzes the oxidation of methanophenazine to dihydromethanophenazine. It shuttles electrons from F(420)H(2), via FAD and iron-sulfur (Fe-S) centers, to methanophenazine (an electron carrier in the membrane). It couples the redox reaction to proton translocation (for every two electrons transferred, two hydrogen ions are translocated across the cytoplasmic membrane), and thus conserves the redox energy in a proton gradient. It also catalyzes the oxidation of F(420)H(2) with quinones such as 2,3-dimethyl-1,4-naphthoquinone, 2-methyl-1,4-naphthoquinone and tetramethyl-p-benzoquinone. The chain is F(420)H(2) dehydrogenase subunit J (fpoJ) from Methanosarcina mazei (strain ATCC BAA-159 / DSM 3647 / Goe1 / Go1 / JCM 11833 / OCM 88) (Methanosarcina frisia).